Consider the following 239-residue polypeptide: Ribonuclease P protein component 3 (239 aa).

It belongs to the eukaryotic/archaeal RNase P protein component 3 family. As to quaternary structure, consists of a catalytic RNA component and at least 4-5 protein subunits.

The protein resides in the cytoplasm. It carries out the reaction Endonucleolytic cleavage of RNA, removing 5'-extranucleotides from tRNA precursor.. Functionally, part of ribonuclease P, a protein complex that generates mature tRNA molecules by cleaving their 5'-ends. The chain is Ribonuclease P protein component 3 from Methanosarcina mazei (strain ATCC BAA-159 / DSM 3647 / Goe1 / Go1 / JCM 11833 / OCM 88) (Methanosarcina frisia).